Here is a 718-residue protein sequence, read N- to C-terminus: Protein Hook homolog 3 (718 aa).

Residue Met1 is modified to N-acetylmethionine. The sufficient for interaction with microtubules stretch occupies residues 1–164; it reads MFSVESLERA…QELMSKESPV (164 aa). Phosphoserine occurs at positions 3 and 6. One can recognise a Calponin-homology (CH) domain in the interval 10–126; it reads AELCESLLTW…RMLQLILGCA (117 aa). Coiled-coil stretches lie at residues 167-433 and 462-667; these read GNDA…VQAQ and EIRE…YIVS. Residue Ser238 is modified to Phosphoserine. The required for association with Golgi stretch occupies residues 553-718; that stretch reads EKLHEANNEL…PGHVQPATAR (166 aa). A required for interaction with MSR1 region spans residues 556-718; it reads HEANNELQKK…PGHVQPATAR (163 aa). The disordered stretch occupies residues 682–718; the sequence is EDRLASTGSGQSFLARQRQATSSRRSYPGHVQPATAR. Phosphoserine is present on residues Ser693 and Ser707. Low complexity predominate over residues 696 to 707; it reads ARQRQATSSRRS.

This sequence belongs to the hook family. In terms of assembly, self-associates. Component of the FTS/Hook/FHIP complex (FHF complex), composed of AKTIP/FTS, FHIP1B, and one or more members of the Hook family of proteins HOOK1, HOOK2, and HOOK3. May interact directly with AKTIP/FTS, HOOK1 and HOOK2. Associates with several subunits of the homotypic vesicular sorting complex (the HOPS complex) including VPS16 and VPS41; these interactions may be indirect. Interacts with MSR1, and this association is stimulated by ligand binding to MSR1. Interacts with microtubules. Part of a tripartite complex with dynein and dynactin, acts an adapter linking the dynein motor complex and dynactin. Interacts with dynein intermediate chain and dynactin (DCTN1). Interacts with CCDC181. Interacts with LRGUK. As to quaternary structure, (Microbial infection) Interacts with Salmonella typhimurium spiC.

It localises to the cytoplasm. It is found in the cytoskeleton. The protein resides in the golgi apparatus. Its function is as follows. Acts as an adapter protein linking the dynein motor complex to various cargos and converts dynein from a non-processive to a highly processive motor in the presence of dynactin. Facilitates the interaction between dynein and dynactin and activates dynein processivity (the ability to move along a microtubule for a long distance without falling off the track). Predominantly recruits 2 dyneins, which increases both the force and speed of the microtubule motor. Component of the FTS/Hook/FHIP complex (FHF complex). The FHF complex may function to promote vesicle trafficking and/or fusion via the homotypic vesicular protein sorting complex (the HOPS complex). May regulate clearance of endocytosed receptors such as MSR1. Participates in defining the architecture and localization of the Golgi complex. FHF complex promotes the distribution of AP-4 complex to the perinuclear area of the cell. Functionally, (Microbial infection) May serve as a target for the spiC protein from Salmonella typhimurium, which inactivates it, leading to a strong alteration in cellular trafficking. The protein is Protein Hook homolog 3 of Homo sapiens (Human).